Consider the following 168-residue polypeptide: Short form salivary protein D7R2 (168 aa).

The signal sequence occupies residues 1-21; sequence MFKKLLLSVGLVWCLISLGQA. Cystine bridges form between Cys-30-Cys-62, Cys-43-Cys-168, and Cys-101-Cys-120. Residues Glu-31 and Arg-46 each coordinate noradrenaline. Position 31 (Glu-31) interacts with serotonin. Serotonin is bound by residues His-59, Tyr-118, Asp-135, and Glu-138. Residues Tyr-118, Asp-135, and Glu-138 each contribute to the histamine site. Residues Asp-135 and Glu-138 each contribute to the noradrenaline site.

It belongs to the PBP/GOBP family. As to expression, female saliva (at protein level). Female salivary gland. Not detected in female carcass without salivary glands. Not detected in male tissues.

It is found in the secreted. In terms of biological role, modulates blood feeding of female mosquitoes on vertebrate species by binding and sequestering different mediators involved in the host response. Binds serotonin, noradrenaline, histamine and adrenaline. Inhibits histamine-, serotonin- and noradrenaline-induced smooth muscle contraction. Exhibits vasodilating activity. The chain is Short form salivary protein D7R2 from Anopheles gambiae (African malaria mosquito).